Consider the following 162-residue polypeptide: Interleukin-15 (162 aa).

Residues 1–29 (MRISKPHLRSISIQCYLCLLLNSHFLTEA) form the signal peptide. Residues 30-48 (GIHVFILGCFSAGLPKTEA) constitute a propeptide that is removed on maturation. 2 cysteine pairs are disulfide-bonded: Cys83-Cys133 and Cys90-Cys136. Residue Asn127 is glycosylated (N-linked (GlcNAc...) asparagine).

It belongs to the IL-15/IL-21 family. As to expression, most abundant in placenta and skeletal muscle. It is also detected in the heart, lung, liver and kidney. IL15-S21AA is preferentially expressed in tissues such as testis and thymus.

Its subcellular location is the secreted. It is found in the cytoplasm. The protein localises to the nucleus. Its function is as follows. Cytokine that plays a major role in the development of inflammatory and protective immune responses to microbial invaders and parasites by modulating immune cells of both the innate and adaptive immune systems. Stimulates the proliferation of natural killer cells, T-cells and B-cells and promotes the secretion of several cytokines. In monocytes, induces the production of IL8 and monocyte chemotactic protein 1/CCL2, two chemokines that attract neutrophils and monocytes respectively to sites of infection. Unlike most cytokines, which are secreted in soluble form, IL15 is expressed in association with its high affinity IL15RA on the surface of IL15-producing cells and delivers signals to target cells that express IL2RB and IL2RG receptor subunits. Binding to its receptor triggers the phosphorylation of JAK1 and JAK3 and the recruitment and subsequent phosphorylation of signal transducer and activator of transcription-3/STAT3 and STAT5. In mast cells, induces the rapid tyrosine phosphorylation of STAT6 and thereby controls mast cell survival and release of cytokines such as IL4. The sequence is that of Interleukin-15 (IL15) from Homo sapiens (Human).